We begin with the raw amino-acid sequence, 762 residues long: Mitochondrial intermediate peptidase (762 aa).

The transit peptide at 1-28 (MQVRTLLTLGKKKVIGNRQCILSLYRKY) directs the protein to the mitochondrion. H544 is a Zn(2+) binding site. Residue E545 is part of the active site. Zn(2+) is bound by residues H548 and H551.

The protein belongs to the peptidase M3 family. Zn(2+) serves as cofactor.

It localises to the mitochondrion matrix. It catalyses the reaction Release of an N-terminal octapeptide as second stage of processing of some proteins imported into the mitochondrion.. In terms of biological role, cleaves proteins, imported into the mitochondrion, to their mature size. While most mitochondrial precursor proteins are processed to the mature form in one step by mitochondrial processing peptidase (MPP), the sequential cleavage by MIP of an octapeptide after initial processing by MPP is a required step for a subgroup of nuclear-encoded precursor proteins destined for the matrix or the inner membrane. The sequence is that of Mitochondrial intermediate peptidase (oct1) from Schizosaccharomyces pombe (strain 972 / ATCC 24843) (Fission yeast).